Consider the following 266-residue polypeptide: Hemin import ATP-binding protein HmuV (266 aa).

Residues 12–248 (LEASHLHYHV…ETLTQWYQAD (237 aa)) enclose the ABC transporter domain. 44–51 (GPNGAGKS) lines the ATP pocket.

Belongs to the ABC transporter superfamily. Heme (hemin) importer (TC 3.A.1.14.5) family. In terms of assembly, the complex is composed of two ATP-binding proteins (HmuV), two transmembrane proteins (HmuU) and a solute-binding protein (HmuT).

Its subcellular location is the cell inner membrane. Functionally, part of the ABC transporter complex HmuTUV involved in hemin import. Responsible for energy coupling to the transport system. This is Hemin import ATP-binding protein HmuV from Yersinia pestis bv. Antiqua (strain Antiqua).